Reading from the N-terminus, the 410-residue chain is Thyroid hormone receptor alpha (410 aa).

Residues 1–32 (MEQKPSKVECGSDPEESSTRSPDGKRKRKNGQ) are disordered. Residues 1–52 (MEQKPSKVECGSDPEESSTRSPDGKRKRKNGQCSLKTSMSGYIPSYLDKDEQ) form a modulating region. Cysteine 53, cysteine 56, cysteine 70, cysteine 73, cysteine 91, cysteine 97, cysteine 107, and cysteine 110 together coordinate Zn(2+). 2 NR C4-type zinc fingers span residues 53 to 73 (CVVC…CEGC) and 91 to 115 (CKYD…FKKC). Residues 53–127 (CVVCGDKATG…VGMAMDLVLD (75 aa)) constitute a DNA-binding region (nuclear receptor). An NR LBD domain is found at 163 to 407 (EEWDLIHVAT…PPLFLEVFED (245 aa)). Residues arginine 228 and serine 277 each coordinate 3,3',5-triiodo-L-thyronine.

It belongs to the nuclear hormone receptor family. NR1 subfamily. As to quaternary structure, binds DNA as a dimer; homodimer and heterodimer with RXRB. Interacts with NCOA3 and NCOA6 coactivators, leading to a strong increase of transcription of target genes. Probably interacts with SFPQ. Interacts with C1D. Interacts with AKAP13. Interacts with TP53INP2. Interacts with PER2. Interacts with TACC1. The interaction with isoform alpha-1, but not alpha-2, is decreased in the presence of thyroid hormone T3.

The protein localises to the nucleus. It is found in the cytoplasm. In terms of biological role, nuclear hormone receptor that can act as a repressor or activator of transcription. High affinity receptor for thyroid hormones, including triiodothyronine and thyroxine. This Ovis aries (Sheep) protein is Thyroid hormone receptor alpha (THRA).